The primary structure comprises 309 residues: Neuropeptide-like 1 (309 aa).

Residues 1 to 28 (MQAVLQSAHSSRRLMLLLSMLLNAAIQP) form the signal peptide. Positions 29-99 (RSIIVSATDD…GEYPDYLEED (71 aa)) are excised as a propeptide. A disordered region spans residues 126–147 (GQLPTAEPGEDYGDADSGEPSE). A compositionally biased stretch (acidic residues) spans 133–144 (PGEDYGDADSGE). The residue at position 164 (Tyr164) is a Tyrosine amide. Asn182 carries the post-translational modification Asparagine amide.

In terms of tissue distribution, MTYamide peptide: Expressed in the larval CNS (at protein level). NAP peptide: Expressed in the larval CNS (at protein level). IPNamide peptide: Expressed in the ventral ganglion of the third larval instar and adult brain (at protein level).

Its subcellular location is the secreted. Functionally, acts as a ligand for the receptor-type guanylate cyclase Gyc76C. Stimulates Gyc76c-dependent cGMP production and modulates the IMD innate immune pathway in response to salt stress by inducing nuclear translocation of NF-kappa-B protein Rel which leads to increased expression of the antimicrobial peptide diptericin. Does not appear to play a role in Gyc76C-mediated wing development. In Drosophila melanogaster (Fruit fly), this protein is Neuropeptide-like 1 (Nplp1).